A 525-amino-acid chain; its full sequence is Protein kinase PINOID 2 (525 aa).

A disordered region spans residues 1 to 27 (MANSSIFYKDNESDYESSTVGPDSSRR). A Protein kinase domain is found at 87 to 465 (FRLLKRLGSG…SIEIKRHEFF (379 aa)). ATP-binding positions include 93 to 101 (LGSGDIGSV) and K118. Catalysis depends on D214, which acts as the Proton acceptor. Residues 466 to 525 (EGVNWALIRSIKPPWVPKEETSHKTKGDNRSVNYYLPPRFMMSRKERNEPYHVSNYFDYF) form the AGC-kinase C-terminal domain.

It belongs to the protein kinase superfamily. Ser/Thr protein kinase family.

It catalyses the reaction L-seryl-[protein] + ATP = O-phospho-L-seryl-[protein] + ADP + H(+). The enzyme catalyses L-threonyl-[protein] + ATP = O-phospho-L-threonyl-[protein] + ADP + H(+). Serine/threonine-protein kinase involved in the regulation of auxin signaling. Plays a minor role in the regulation of cellular auxin efflux and cotyledon organogenesis. The chain is Protein kinase PINOID 2 (PID2) from Arabidopsis thaliana (Mouse-ear cress).